The sequence spans 554 residues: Glucose-6-phosphate isomerase (554 aa).

Residue E359 is the Proton donor of the active site. Catalysis depends on residues H390 and K518.

The protein belongs to the GPI family.

It localises to the cytoplasm. It carries out the reaction alpha-D-glucose 6-phosphate = beta-D-fructose 6-phosphate. It participates in carbohydrate biosynthesis; gluconeogenesis. The protein operates within carbohydrate degradation; glycolysis; D-glyceraldehyde 3-phosphate and glycerone phosphate from D-glucose: step 2/4. Catalyzes the reversible isomerization of glucose-6-phosphate to fructose-6-phosphate. This is Glucose-6-phosphate isomerase from Pseudomonas putida (strain GB-1).